Consider the following 549-residue polypeptide: Thermosome subunit (549 aa).

A compositionally biased stretch (basic and acidic residues) spans 528 to 538 (EKEKEGEKGGG). A disordered region spans residues 528-549 (EKEKEGEKGGGSEEFSGSSDLD). Residues 540–549 (EEFSGSSDLD) are compositionally biased toward low complexity.

This sequence belongs to the TCP-1 chaperonin family. In terms of assembly, forms an oligomeric complex of eight-membered rings.

Molecular chaperone; binds unfolded polypeptides in vitro, and has a weak ATPase activity. The sequence is that of Thermosome subunit (ths) from Pyrococcus horikoshii (strain ATCC 700860 / DSM 12428 / JCM 9974 / NBRC 100139 / OT-3).